Reading from the N-terminus, the 217-residue chain is 3,4-dihydroxy-2-butanone 4-phosphate synthase (217 aa).

D-ribulose 5-phosphate contacts are provided by residues 37-38 (RE), aspartate 42, 150-154 (RGGHT), and glutamate 174. Glutamate 38 is a binding site for Mg(2+). Position 153 (histidine 153) interacts with Mg(2+).

It belongs to the DHBP synthase family. Homodimer. The cofactor is Mg(2+). Mn(2+) is required as a cofactor.

The enzyme catalyses D-ribulose 5-phosphate = (2S)-2-hydroxy-3-oxobutyl phosphate + formate + H(+). Its pathway is cofactor biosynthesis; riboflavin biosynthesis; 2-hydroxy-3-oxobutyl phosphate from D-ribulose 5-phosphate: step 1/1. In terms of biological role, catalyzes the conversion of D-ribulose 5-phosphate to formate and 3,4-dihydroxy-2-butanone 4-phosphate. This chain is 3,4-dihydroxy-2-butanone 4-phosphate synthase, found in Klebsiella pneumoniae subsp. pneumoniae (strain ATCC 700721 / MGH 78578).